The following is a 259-amino-acid chain: Phosphatidylglycerol--prolipoprotein diacylglyceryl transferase (259 aa).

The next 4 membrane-spanning stretches (helical) occupy residues isoleucine 9 to isoleucine 29, phenylalanine 55 to tyrosine 75, glutamate 92 to cysteine 112, and isoleucine 117 to glycine 137. Arginine 138 serves as a coordination point for a 1,2-diacyl-sn-glycero-3-phospho-(1'-sn-glycerol). 3 helical membrane-spanning segments follow: residues glutamine 172–phenylalanine 192, glycine 201–phenylalanine 221, and isoleucine 228–leucine 248.

Belongs to the Lgt family.

The protein resides in the cell inner membrane. It catalyses the reaction L-cysteinyl-[prolipoprotein] + a 1,2-diacyl-sn-glycero-3-phospho-(1'-sn-glycerol) = an S-1,2-diacyl-sn-glyceryl-L-cysteinyl-[prolipoprotein] + sn-glycerol 1-phosphate + H(+). It functions in the pathway protein modification; lipoprotein biosynthesis (diacylglyceryl transfer). Its function is as follows. Catalyzes the transfer of the diacylglyceryl group from phosphatidylglycerol to the sulfhydryl group of the N-terminal cysteine of a prolipoprotein, the first step in the formation of mature lipoproteins. In Rickettsia conorii (strain ATCC VR-613 / Malish 7), this protein is Phosphatidylglycerol--prolipoprotein diacylglyceryl transferase.